We begin with the raw amino-acid sequence, 102 residues long: NADH-quinone oxidoreductase subunit K 2 (102 aa).

A run of 3 helical transmembrane segments spans residues 5 to 25 (FEHVLILAGLLFALGLVCVLV), 30 to 50 (LIMLLIGIEVMLNAAMLAFVG), and 65 to 85 (LIIMALTSAEVSLALAMVVYL).

The protein belongs to the complex I subunit 4L family. NDH-1 is composed of 14 different subunits. Subunits NuoA, H, J, K, L, M, N constitute the membrane sector of the complex.

Its subcellular location is the cell inner membrane. The catalysed reaction is a quinone + NADH + 5 H(+)(in) = a quinol + NAD(+) + 4 H(+)(out). NDH-1 shuttles electrons from NADH, via FMN and iron-sulfur (Fe-S) centers, to quinones in the respiratory chain. The immediate electron acceptor for the enzyme in this species is believed to be ubiquinone. Couples the redox reaction to proton translocation (for every two electrons transferred, four hydrogen ions are translocated across the cytoplasmic membrane), and thus conserves the redox energy in a proton gradient. The sequence is that of NADH-quinone oxidoreductase subunit K 2 from Geobacter sulfurreducens (strain ATCC 51573 / DSM 12127 / PCA).